Reading from the N-terminus, the 170-residue chain is tRNA-splicing endonuclease (170 aa).

Catalysis depends on residues Y110, H116, and K147.

The protein belongs to the tRNA-intron endonuclease family. Archaeal short subfamily. As to quaternary structure, homotetramer; although the tetramer contains four active sites, only two participate in the cleavage. Therefore, it should be considered as a dimer of dimers.

It carries out the reaction pretRNA = a 3'-half-tRNA molecule with a 5'-OH end + a 5'-half-tRNA molecule with a 2',3'-cyclic phosphate end + an intron with a 2',3'-cyclic phosphate and a 5'-hydroxyl terminus.. Endonuclease that removes tRNA introns. Cleaves pre-tRNA at the 5'- and 3'-splice sites to release the intron. The products are an intron and two tRNA half-molecules bearing 2',3' cyclic phosphate and 5'-OH termini. Recognizes a pseudosymmetric substrate in which 2 bulged loops of 3 bases are separated by a stem of 4 bp. The chain is tRNA-splicing endonuclease from Pyrococcus abyssi (strain GE5 / Orsay).